The following is a 224-amino-acid chain: tRNA (guanine-N(7)-)-methyltransferase (224 aa).

S-adenosyl-L-methionine-binding residues include glutamate 54, glutamate 79, glutamate 106, and aspartate 129. The active site involves aspartate 129. Substrate contacts are provided by lysine 133 and aspartate 165.

Belongs to the class I-like SAM-binding methyltransferase superfamily. TrmB family.

The enzyme catalyses guanosine(46) in tRNA + S-adenosyl-L-methionine = N(7)-methylguanosine(46) in tRNA + S-adenosyl-L-homocysteine. The protein operates within tRNA modification; N(7)-methylguanine-tRNA biosynthesis. Functionally, catalyzes the formation of N(7)-methylguanine at position 46 (m7G46) in tRNA. This Chlamydia muridarum (strain MoPn / Nigg) protein is tRNA (guanine-N(7)-)-methyltransferase.